A 74-amino-acid polypeptide reads, in one-letter code: Large ribosomal subunit protein uL29 (74 aa).

Belongs to the universal ribosomal protein uL29 family.

The protein is Large ribosomal subunit protein uL29 of Streptomyces griseus subsp. griseus (strain JCM 4626 / CBS 651.72 / NBRC 13350 / KCC S-0626 / ISP 5235).